Reading from the N-terminus, the 1101-residue chain is Error-prone DNA polymerase (1101 aa).

A disordered region spans residues Ala-1055–His-1101. Polar residues predominate over residues Val-1065–Ser-1074. The segment covering His-1086–His-1101 has biased composition (basic and acidic residues).

The protein belongs to the DNA polymerase type-C family. DnaE2 subfamily.

The protein resides in the cytoplasm. It carries out the reaction DNA(n) + a 2'-deoxyribonucleoside 5'-triphosphate = DNA(n+1) + diphosphate. Functionally, DNA polymerase involved in damage-induced mutagenesis and translesion synthesis (TLS). It is not the major replicative DNA polymerase. This chain is Error-prone DNA polymerase, found in Ruegeria pomeroyi (strain ATCC 700808 / DSM 15171 / DSS-3) (Silicibacter pomeroyi).